We begin with the raw amino-acid sequence, 202 residues long: MTAESTRKASIERSTKETSIAVSVDLDGVGKFDITTGVGFFDHMLEQLSRHSLIDMRVMAKGDLHIDDHHTVEDTGIALGQAVAKALGERRGIVRYASLDLAMDDTLTGAAVDVSGRAFLVWNVNFTTAKIGTFDTELVREFFQAFAMNAGITLHINNHYGANNHHIAESTFKAVARVLRAALETDPRQKDAIPSTKGSLKG.

It belongs to the imidazoleglycerol-phosphate dehydratase family.

It is found in the cytoplasm. The enzyme catalyses D-erythro-1-(imidazol-4-yl)glycerol 3-phosphate = 3-(imidazol-4-yl)-2-oxopropyl phosphate + H2O. It functions in the pathway amino-acid biosynthesis; L-histidine biosynthesis; L-histidine from 5-phospho-alpha-D-ribose 1-diphosphate: step 6/9. The polypeptide is Imidazoleglycerol-phosphate dehydratase (Brucella abortus (strain S19)).